Reading from the N-terminus, the 162-residue chain is Protein A49 (162 aa).

The protein belongs to the poxviridae A49 protein family.

The chain is Protein A49 from Variola virus (isolate Human/India/Ind3/1967) (VARV).